Reading from the N-terminus, the 509-residue chain is Tyrosine-protein kinase Lck (509 aa).

The N-myristoyl glycine moiety is linked to residue glycine 2. Residues 2–72 form an interactions with CD4 and CD8 region; sequence GCGCSSHPED…DNLVIALHSY (71 aa). Residues cysteine 3 and cysteine 5 are each lipidated (S-palmitoyl cysteine). Positions 61–121 constitute an SH3 domain; sequence LQDNLVIALH…PFNFVAKANS (61 aa). Lysine 99 is covalently cross-linked (Glycyl lysine isopeptide (Lys-Gly) (interchain with G-Cter in ubiquitin)). The residue at position 102 (serine 102) is a Phosphoserine. Residues 127-224 form the SH2 domain; it reads WFFKNLSRKD…GLCTRLSRPC (98 aa). Residues 154-242 form an interaction with PTPRH region; that stretch reads RESESTAGSF…WWEDEWEVPR (89 aa). At threonine 159 the chain carries Phosphothreonine. A Phosphoserine modification is found at serine 162. Tyrosine 192 bears the Phosphotyrosine mark. A Phosphoserine modification is found at serine 194. One can recognise a Protein kinase domain in the interval 245-498; that stretch reads LKLVERLGAG…YLRSVLEDFF (254 aa). ATP is bound by residues 251–259 and lysine 273; that span reads LGAGQFGEV. Lysine 276 is covalently cross-linked (Glycyl lysine isopeptide (Lys-Gly) (interchain with G-Cter in ubiquitin)). The active-site Proton acceptor is the aspartate 364. Tyrosine 394 is modified (phosphotyrosine; by autocatalysis). Position 505 is a phosphotyrosine; by CSK (tyrosine 505).

It belongs to the protein kinase superfamily. Tyr protein kinase family. SRC subfamily. In terms of assembly, binds to the cytoplasmic domain of cell surface receptors, such as AXL, CD2, CD4, CD5, CD8, CD44, CD45 and CD122. Also binds to effector molecules, such as PI4K, VAV1, RASA1, FYB1 and to other protein kinases including CDK1, RAF1, ZAP70 and SYK. Binds to phosphatidylinositol 3'-kinase (PI3K) from T-lymphocytes through its SH3 domain and to the tyrosine phosphorylated form of KHDRBS1/p70 through its SH2 domain. This interaction inhibits its tyrosine-kinase activity. Interacts with SQSTM1. Interacts with phosphorylated LIME1. Interacts with CBLB and PTPRH. Interacts with RUNX3. Forms a signaling complex with EPHA1, PTK2B and PI3-KINASE; upon activation by EFNA1 which may regulate T-lymphocyte migration. Associates with ZAP70 and RHOH; these interactions allow LCK-mediated RHOH and CD3 subunit phosphorylation in the presence of functional ZAP70. Interacts with UNC119; this interaction plays a crucial role in activation of LCK. Interacts with CEACAM1 (via cytoplasmic domain); mediates CEACAM1 phosphorylation resulting in PTPN6 recruitment that dephosphorylates TCR stimulation-induced CD247 and ZAP70. Interacts with CD160. Interacts with CD48. (Microbial infection) Interacts with herpes simplex virus 1 UL46; this interaction activates LCK. As to quaternary structure, (Microbial infection) Interacts with HIV-1 Nef through its SH3 domain. In terms of processing, autophosphorylated on Tyr-394, increasing enzymatic activity, this site is dephosphorylated by PTN22. Phosphorylated on Tyr-505 by CSK, decreasing activity. Dephosphorylated by PTPRC/CD45. Dephosphorylation at Tyr-394 by PTPN2 negatively regulates T-cell receptor signaling. Dephosphorylation at Tyr-394 by DUSP22 negatively regulates T-cell receptor signaling. Myristoylation is required prior to palmitoylation. Post-translationally, palmitoylation regulates association with the plasma membrane and could be mediated by ZDHHC2. In terms of processing, 'Lys-63'-linked ubiquitinated at Lys-99 and Lys-276 by UBR2; this modification is required for autophosphorylation at Tyr-394. In terms of tissue distribution, expressed specifically in lymphoid cells.

The protein resides in the cell membrane. It is found in the cytoplasm. Its subcellular location is the cytosol. It catalyses the reaction L-tyrosyl-[protein] + ATP = O-phospho-L-tyrosyl-[protein] + ADP + H(+). With respect to regulation, the relative activities of the inhibitory tyrosine-protein kinase CSK and the activating tyrosine-protein phosphatase PTPRC/CD45 determine the level of LCK activity. These interactions allow rapid and efficient activation of LCK in response to TCR stimulation. Its function is as follows. Non-receptor tyrosine-protein kinase that plays an essential role in the selection and maturation of developing T-cells in the thymus and in the function of mature T-cells. Plays a key role in T-cell antigen receptor (TCR)-linked signal transduction pathways. Constitutively associated with the cytoplasmic portions of the CD4 and CD8 surface receptors. Association of the TCR with a peptide antigen-bound MHC complex facilitates the interaction of CD4 and CD8 with MHC class II and class I molecules, respectively, thereby recruiting the associated LCK protein to the vicinity of the TCR/CD3 complex. LCK then phosphorylates tyrosine residues within the immunoreceptor tyrosine-based activation motifs (ITAM) of the cytoplasmic tails of the TCR-gamma chains and CD3 subunits, initiating the TCR/CD3 signaling pathway. Once stimulated, the TCR recruits the tyrosine kinase ZAP70, that becomes phosphorylated and activated by LCK. Following this, a large number of signaling molecules are recruited, ultimately leading to lymphokine production. LCK also contributes to signaling by other receptor molecules. Associates directly with the cytoplasmic tail of CD2, which leads to hyperphosphorylation and activation of LCK. Also plays a role in the IL2 receptor-linked signaling pathway that controls the T-cell proliferative response. Binding of IL2 to its receptor results in increased activity of LCK. Is expressed at all stages of thymocyte development and is required for the regulation of maturation events that are governed by both pre-TCR and mature alpha beta TCR. Phosphorylates other substrates including RUNX3, PTK2B/PYK2, the microtubule-associated protein MAPT, RHOH or TYROBP. Interacts with FYB2. The protein is Tyrosine-protein kinase Lck (LCK) of Homo sapiens (Human).